The chain runs to 150 residues: Large ribosomal subunit protein bL9 (150 aa).

Belongs to the bacterial ribosomal protein bL9 family.

In terms of biological role, binds to the 23S rRNA. This chain is Large ribosomal subunit protein bL9, found in Clavibacter sepedonicus (Clavibacter michiganensis subsp. sepedonicus).